The chain runs to 218 residues: Octanoyltransferase (218 aa).

Residues 31 to 206 (REAADEVWLV…QLVKHLDYAE (176 aa)) form the BPL/LPL catalytic domain. Residues 70–77 (RGGQVTYH), 137–139 (SLG), and 150–152 (GLA) each bind substrate. Residue Cys168 is the Acyl-thioester intermediate of the active site.

The protein belongs to the LipB family.

Its subcellular location is the cytoplasm. It catalyses the reaction octanoyl-[ACP] + L-lysyl-[protein] = N(6)-octanoyl-L-lysyl-[protein] + holo-[ACP] + H(+). The protein operates within protein modification; protein lipoylation via endogenous pathway; protein N(6)-(lipoyl)lysine from octanoyl-[acyl-carrier-protein]: step 1/2. Catalyzes the transfer of endogenously produced octanoic acid from octanoyl-acyl-carrier-protein onto the lipoyl domains of lipoate-dependent enzymes. Lipoyl-ACP can also act as a substrate although octanoyl-ACP is likely to be the physiological substrate. The sequence is that of Octanoyltransferase from Pseudomonas syringae pv. syringae (strain B728a).